Reading from the N-terminus, the 393-residue chain is Protein TsgA (393 aa).

Residues 1–10 (MTNSNRIKLT) are Cytoplasmic-facing. Residues 11–31 (WISFLSYALTGALVIVTGMVM) form a helical membrane-spanning segment. Topologically, residues 32-50 (GNIADYFHLPVSSMSNTFT) are periplasmic. Residues 51–71 (FLNAGILISIFLNAWLMEIIP) traverse the membrane as a helical segment. Residues 72–77 (LKTQLR) are Cytoplasmic-facing. A helical transmembrane segment spans residues 78–98 (FGFILMVLAVAGLMFGHSLAL). At 99–100 (FS) the chain is on the periplasmic side. The helical transmembrane segment at 101-121 (AAMFVLGLVSGITMSIGTFLI) threads the bilayer. The Cytoplasmic segment spans residues 122–133 (TQLYEGRQRGSR). The chain crosses the membrane as a helical span at residues 134–154 (LLFTDSFFSMAGMIFPMVAAF). At 155 to 161 (LLARSIE) the chain is on the periplasmic side. Residues 162 to 182 (WYWVYACIGLVYLAIFILTFG) traverse the membrane as a helical segment. At 183 to 205 (CEFPALGKHAQHSQAPVVKEKWG) the chain is on the cytoplasmic side. Residues 206 to 226 (IGVLFLAVAALCYILGQLGFI) form a helical membrane-spanning segment. The Periplasmic segment spans residues 227–244 (SWVPEYAKGLGMSLNDAG). The helical transmembrane segment at 245-265 (ALVSDFWMSYMFGMWAFSFIL) threads the bilayer. The Cytoplasmic portion of the chain corresponds to 266-272 (RFFDLQR). The helical transmembrane segment at 273-293 (ILTVLAGMAAVLMYLFITGTQ) threads the bilayer. Residues 294–297 (AHMP) lie on the Periplasmic side of the membrane. Residues 298–318 (WFILTLGFFSSAIYTSIITLG) traverse the membrane as a helical segment. Topologically, residues 319–331 (SQQTKVASPKLVN) are cytoplasmic. A helical transmembrane segment spans residues 332-352 (FILTCGTIGTMLTFVVTGPIV). Residues 353-360 (AHSGPQAA) are Periplasmic-facing. A helical transmembrane segment spans residues 361–381 (LLTANGLYAVVFVMCFALGFV). At 382-393 (SRHRQHSAPATH) the chain is on the cytoplasmic side.

The protein belongs to the major facilitator superfamily. TsgA family.

The protein localises to the cell inner membrane. In Salmonella choleraesuis (strain SC-B67), this protein is Protein TsgA.